Consider the following 687-residue polypeptide: Homeobox-leucine zipper protein HDG12 (687 aa).

The segment at 1–32 (MEFLGDSQNHDSSETEKKNKKKKRFHRHTPHQ) is disordered. Basic and acidic residues predominate over residues 8 to 17 (QNHDSSETEK). Over residues 18 to 30 (KNKKKKRFHRHTP) the composition is skewed to basic residues. The homeobox DNA-binding region spans 21-80 (KKKRFHRHTPHQIQRLESTFNECQHPDEKQRNQLSRELGLAPRQIKFWFQNRRTQKKAQH). A coiled-coil region spans residues 87 to 150 (ALKEENDKIR…LERVSSIAAK (64 aa)). The 235-residue stretch at 206-440 (SEMDKSLMTN…LQRMCERFTN (235 aa)) folds into the START domain.

It belongs to the HD-ZIP homeobox family. Class IV subfamily. In terms of assembly, interacts with BBM. Expressed in apical meristems and young epidermal tissue including trichomes and stipules. Expressed in lateral root tips, the L1 layer of apical inflorescence meristems and early flower primordia, carpel and stamen filament epidermis, stigma papillae, ovule primordia, nucellus and embryo.

The protein localises to the nucleus. Probable transcription factor that acts as a negative regulator of trichome branching in association with HDG11. Seems to promote cell differentiation. May regulate cell differentiation and proliferation during root and shoot meristem development. Acts as a positive regulator of SCL18/LAS expression. Involved, together with PDF2, in the regulation of flower organs development by promoting the expression of APETALA 3 (AP3) in the epidermis and internal cell layers of developing flowers. The polypeptide is Homeobox-leucine zipper protein HDG12 (Arabidopsis thaliana (Mouse-ear cress)).